The chain runs to 502 residues: Probable mRNA-splicing protein ubp10 (502 aa).

The segment at 56 to 153 adopts a UBP-type; degenerate zinc-finger fold; the sequence is SQNLYLDTIN…YVMRPTFTKL (98 aa). Cys-89, Cys-92, His-108, and His-114 together coordinate Zn(2+). The USP domain occupies 178 to 501; it reads VGMNNIKNND…ESFIQLWERS (324 aa).

It belongs to the peptidase C19 family.

The protein localises to the nucleus. Its function is as follows. May play a role in mRNA splicing. It is unsure if the protein really exhibits hydrolase activity. Could be a competitor of ubiquitin C-terminal hydrolases (UCHs). In Schizosaccharomyces pombe (strain 972 / ATCC 24843) (Fission yeast), this protein is Probable mRNA-splicing protein ubp10 (ubp10).